A 613-amino-acid polypeptide reads, in one-letter code: Putative adenosylhomocysteinase 3 (613 aa).

2 stretches are compositionally biased toward low complexity: residues 1–14 and 35–44; these read MSVQ…AAKV and AAAVGAMVPP. The tract at residues 1 to 186 is disordered; the sequence is MSVQVVSAAA…KQQKNSKGSS (186 aa). Serine 2 carries the post-translational modification N-acetylserine. The tract at residues 2–111 is LISN domain, inhibits interaction with ITPR1; the sequence is SVQVVSAAAA…DGGEALVSPD (110 aa). Pro residues predominate over residues 52 to 68; that stretch reads APAPAPAAERPPAPGPG. Positions 70–80 are enriched in low complexity; it reads GPTAALSPAAG. Serine 109 bears the Phosphoserine mark. Basic residues predominate over residues 137 to 146; that stretch reads RPTKIGRRSL. A compositionally biased stretch (low complexity) spans 147-166; it reads SRSISQSSTDSYSSAASYTD. A phosphoserine mark is found at serine 151, serine 154, serine 157, and serine 160. Threonine 238, aspartate 312, and glutamate 337 together coordinate substrate. 338-340 provides a ligand contact to NAD(+); sequence SVT. Residues lysine 367 and aspartate 371 each coordinate substrate. NAD(+) contacts are provided by residues asparagine 372, 403–408, glutamate 424, asparagine 459, 480–482, and asparagine 527; these read GEVGKG and MGH.

The protein belongs to the adenosylhomocysteinase family. As to quaternary structure, homotetramer. Forms heteromultimers with AHCYL1 (via the C-terminal region). Interacts with ITPR1; with lower affinity than AHCYL1 and maybe via ITPR1. Interacts with SLC4A4. Interacts with ZCCHC4. Requires NAD(+) as cofactor. Post-translationally, phosphorylated during neuronal differentiation at the LISN domain. As to expression, highly expressed in cerebrum, cerebellum and kidney. Also expressed in thymus, spleen, testis, ovary and, at lower, levels in lung and liver (at protein level). In cerebellum, expressed in interneurons.

The protein resides in the cytoplasm. The protein localises to the microsome. The enzyme catalyses S-adenosyl-L-homocysteine + H2O = L-homocysteine + adenosine. It participates in amino-acid biosynthesis; L-homocysteine biosynthesis; L-homocysteine from S-adenosyl-L-homocysteine: step 1/1. Its function is as follows. May regulate the electrogenic sodium/bicarbonate cotransporter SLC4A4 activity and Mg(2+)-sensitivity. On the contrary of its homolog AHCYL1, does not regulate ITPR1 sensitivity to inositol 1,4,5-trisphosphate. This Mus musculus (Mouse) protein is Putative adenosylhomocysteinase 3 (Ahcyl2).